Here is a 950-residue protein sequence, read N- to C-terminus: Translation initiation factor IF-2 (950 aa).

Disordered regions lie at residues 57-254 and 304-328; these read LAER…AVVI and DVSRDKRRGRQPGRPISEEQAKSLS. Composition is skewed to low complexity over residues 101–131 and 139–169; these read AEPQYAEPQAEQAYEPEPQAAQPEAGAEPAA and AAPLAAQAAPSPGAEAAAPAAPQAQPAQPAA. The segment covering 170–215 has biased composition (pro residues); the sequence is PAAPPAPTAQPSAPPPAAAQPRPPQPSAPSRPPPPGYRPAPPPGAR. The segment covering 216–233 has biased composition (low complexity); sequence PPVSAAPGAPGQPGAAGQ. In terms of domain architecture, tr-type G spans 449–618; that stretch reads IRPPVVTVMG…ALQSEVLELK (170 aa). Residues 458–465 are G1; that stretch reads GHVDHGKT. GTP is bound at residue 458 to 465; sequence GHVDHGKT. The G2 stretch occupies residues 483 to 487; that stretch reads GITQH. Residues 504–507 form a G3 region; it reads DTPG. Residues 504–508 and 558–561 contribute to the GTP site; these read DTPGH and NKVD. The segment at 558–561 is G4; that stretch reads NKVD. The interval 594 to 596 is G5; the sequence is SAR.

This sequence belongs to the TRAFAC class translation factor GTPase superfamily. Classic translation factor GTPase family. IF-2 subfamily.

The protein localises to the cytoplasm. One of the essential components for the initiation of protein synthesis. Protects formylmethionyl-tRNA from spontaneous hydrolysis and promotes its binding to the 30S ribosomal subunits. Also involved in the hydrolysis of GTP during the formation of the 70S ribosomal complex. In Anaeromyxobacter dehalogenans (strain 2CP-C), this protein is Translation initiation factor IF-2.